A 1159-amino-acid chain; its full sequence is Cation channel sperm-associated auxiliary subunit gamma (1159 aa).

An N-terminal signal peptide occupies residues methionine 1–leucine 35. Residues tryptophan 36–arginine 1065 are Extracellular-facing. 2 disulfide bridges follow: cysteine 44–cysteine 105 and cysteine 159–cysteine 165. A glycan (N-linked (GlcNAc...) asparagine) is linked at asparagine 102. The N-linked (GlcNAc...) asparagine glycan is linked to asparagine 177. A disulfide bridge links cysteine 288 with cysteine 343. N-linked (GlcNAc...) asparagine glycosylation is present at asparagine 355. An intrachain disulfide couples cysteine 394 to cysteine 402. Residues asparagine 426 and asparagine 574 are each glycosylated (N-linked (GlcNAc...) asparagine). 5 disulfides stabilise this stretch: cysteine 638–cysteine 860, cysteine 806–cysteine 834, cysteine 882–cysteine 1046, cysteine 909–cysteine 918, and cysteine 1010–cysteine 1016. A helical transmembrane segment spans residues alanine 1066–phenylalanine 1087. The Cytoplasmic segment spans residues cysteine 1088 to threonine 1159. The tract at residues phenylalanine 1138–threonine 1159 is disordered. Basic and acidic residues predominate over residues methionine 1142–threonine 1159.

Belongs to the CATSPERG family. In terms of assembly, component of the CatSper complex or CatSpermasome composed of the core pore-forming members CATSPER1, CATSPER2, CATSPER3 and CATSPER4 as well as auxiliary members CATSPERB, CATSPERG, CATSPERD, CATSPERE, CATSPERZ, SCLO6C1, TMEM249, TMEM262 and EFCAB9. HSPA1 may be an additional auxiliary complex member. The core complex members CATSPER1, CATSPER2, CATSPER3 and CATSPER4 form a heterotetrameric channel. The auxiliary CATSPERB, CATSPERG, CATSPERD and CATSPERE subunits form a pavilion-like structure over the pore which stabilizes the complex through interactions with CATSPER4, CATSPER3, CATSPER1 and CATSPER2 respectively. TMEM262/CATSPERH interacts with CATSPERB, further stabilizing the complex. C2CD6/CATSPERT interacts at least with CATSPERD and is required for targeting the CatSper complex in the flagellar membrane.

The protein resides in the cell projection. It localises to the cilium. The protein localises to the flagellum membrane. Functionally, auxiliary component of the CatSper complex, a complex involved in sperm cell hyperactivation. Sperm cell hyperactivation is needed for sperm motility which is essential late in the preparation of sperm for fertilization. The chain is Cation channel sperm-associated auxiliary subunit gamma from Macaca fascicularis (Crab-eating macaque).